The chain runs to 572 residues: Urease subunit alpha (572 aa).

The Urease domain occupies 136-572 (GGIDTHIHWI…VPLAQRYFLF (437 aa)). The Ni(2+) site is built by histidine 141, histidine 143, and lysine 224. Residue lysine 224 is modified to N6-carboxylysine. Residue histidine 226 coordinates substrate. Ni(2+) is bound by residues histidine 253 and histidine 279. The active-site Proton donor is histidine 327. Aspartate 367 contributes to the Ni(2+) binding site.

The protein belongs to the metallo-dependent hydrolases superfamily. Urease alpha subunit family. In terms of assembly, heterotrimer of UreA (gamma), UreB (beta) and UreC (alpha) subunits. Three heterotrimers associate to form the active enzyme. Ni cation is required as a cofactor. Carboxylation allows a single lysine to coordinate two nickel ions.

The protein localises to the cytoplasm. It catalyses the reaction urea + 2 H2O + H(+) = hydrogencarbonate + 2 NH4(+). It participates in nitrogen metabolism; urea degradation; CO(2) and NH(3) from urea (urease route): step 1/1. The polypeptide is Urease subunit alpha (Actinobacillus pleuropneumoniae serotype 3 (strain JL03)).